A 125-amino-acid polypeptide reads, in one-letter code: Small ribosomal subunit protein uS13 (125 aa).

The interval 97–125 (PLRGQRTKTNARTRKGKRKTVANKKMASK) is disordered.

The protein belongs to the universal ribosomal protein uS13 family. In terms of assembly, part of the 30S ribosomal subunit. Forms a loose heterodimer with protein S19. Forms two bridges to the 50S subunit in the 70S ribosome.

In terms of biological role, located at the top of the head of the 30S subunit, it contacts several helices of the 16S rRNA. In the 70S ribosome it contacts the 23S rRNA (bridge B1a) and protein L5 of the 50S subunit (bridge B1b), connecting the 2 subunits; these bridges are implicated in subunit movement. Contacts the tRNAs in the A and P-sites. The protein is Small ribosomal subunit protein uS13 of Borrelia hermsii (strain HS1 / DAH).